Here is a 455-residue protein sequence, read N- to C-terminus: ATP-dependent protease ATPase subunit HslU (455 aa).

ATP contacts are provided by residues V23, 65 to 70 (GVGKTE), D266, E333, and R405.

It belongs to the ClpX chaperone family. HslU subfamily. A double ring-shaped homohexamer of HslV is capped on each side by a ring-shaped HslU homohexamer. The assembly of the HslU/HslV complex is dependent on binding of ATP.

The protein localises to the cytoplasm. Functionally, ATPase subunit of a proteasome-like degradation complex; this subunit has chaperone activity. The binding of ATP and its subsequent hydrolysis by HslU are essential for unfolding of protein substrates subsequently hydrolyzed by HslV. HslU recognizes the N-terminal part of its protein substrates and unfolds these before they are guided to HslV for hydrolysis. This Xanthomonas euvesicatoria pv. vesicatoria (strain 85-10) (Xanthomonas campestris pv. vesicatoria) protein is ATP-dependent protease ATPase subunit HslU.